The chain runs to 295 residues: Protein FAM110A (295 aa).

Disordered stretches follow at residues P117 to I148 and P160 to L191. Pro residues-rich tracts occupy residues L138–S147 and P160–G171.

The protein belongs to the FAM110 family. In terms of assembly, may interact with CSPP1.

It localises to the cytoplasm. The protein resides in the cytoskeleton. The protein localises to the microtubule organizing center. It is found in the centrosome. Its subcellular location is the spindle pole. This Bos taurus (Bovine) protein is Protein FAM110A (FAM110A).